We begin with the raw amino-acid sequence, 89 residues long: MGLKEEFEEHAEKVKTLPAAPSNDDMLILYGLYKQATVGPVNTSRPGMFNMREKYKWDAWKAVEGKSKEEAMGDYITKVKQLFEAAGSS.

The 86-residue stretch at 3 to 88 (LKEEFEEHAE…VKQLFEAAGS (86 aa)) folds into the ACB domain. An acyl-CoA contacts are provided by residues 30 to 34 (YGLYK), lysine 56, and tyrosine 75.

It belongs to the ACBP family.

Its function is as follows. Binds medium- and long-chain acyl-CoA esters with very high affinity and may function as an intracellular carrier of acyl-CoA esters. This Gossypium hirsutum (Upland cotton) protein is Acyl-CoA-binding protein.